Consider the following 546-residue polypeptide: Chaperonin GroEL (546 aa).

Residues 30–33 (TLGP), Lys51, 87–91 (DGTTT), Gly415, and Asp495 each bind ATP.

It belongs to the chaperonin (HSP60) family. As to quaternary structure, forms a cylinder of 14 subunits composed of two heptameric rings stacked back-to-back. Interacts with the co-chaperonin GroES.

Its subcellular location is the cytoplasm. The catalysed reaction is ATP + H2O + a folded polypeptide = ADP + phosphate + an unfolded polypeptide.. Its function is as follows. Together with its co-chaperonin GroES, plays an essential role in assisting protein folding. The GroEL-GroES system forms a nano-cage that allows encapsulation of the non-native substrate proteins and provides a physical environment optimized to promote and accelerate protein folding. In Brucella melitensis biotype 2 (strain ATCC 23457), this protein is Chaperonin GroEL.